The chain runs to 1337 residues: ATP-dependent helicase/nuclease subunit A (1337 aa).

Residues 3–484 (FTPSKEQEPA…LDLSDNYRSR (482 aa)) enclose the UvrD-like helicase ATP-binding domain. 24 to 31 (ASAGSGKT) contacts ATP. In terms of domain architecture, UvrD-like helicase C-terminal spans 522-867 (ADRDQASPAT…NVMTIHKSKG (346 aa)).

Belongs to the helicase family. AddA subfamily. Heterodimer of AddA and AddB/RexB. It depends on Mg(2+) as a cofactor.

The enzyme catalyses Couples ATP hydrolysis with the unwinding of duplex DNA by translocating in the 3'-5' direction.. It carries out the reaction ATP + H2O = ADP + phosphate + H(+). The heterodimer acts as both an ATP-dependent DNA helicase and an ATP-dependent, dual-direction single-stranded exonuclease. Recognizes the chi site generating a DNA molecule suitable for the initiation of homologous recombination. The AddA nuclease domain is required for chi fragment generation; this subunit has the helicase and 3' -&gt; 5' nuclease activities. The polypeptide is ATP-dependent helicase/nuclease subunit A (Limosilactobacillus fermentum (strain NBRC 3956 / LMG 18251) (Lactobacillus fermentum)).